The sequence spans 198 residues: Holliday junction resolvase RecU (198 aa).

Residues 1-22 are disordered; it reads MVNYPHKVSSQKRQTSLSQPKN. Residues 11-22 are compositionally biased toward polar residues; sequence QKRQTSLSQPKN. Positions 81, 83, 96, and 115 each coordinate Mg(2+).

Belongs to the RecU family. It depends on Mg(2+) as a cofactor.

The protein localises to the cytoplasm. It catalyses the reaction Endonucleolytic cleavage at a junction such as a reciprocal single-stranded crossover between two homologous DNA duplexes (Holliday junction).. Endonuclease that resolves Holliday junction intermediates in genetic recombination. Cleaves mobile four-strand junctions by introducing symmetrical nicks in paired strands. Promotes annealing of linear ssDNA with homologous dsDNA. Required for DNA repair, homologous recombination and chromosome segregation. This Streptococcus pneumoniae serotype 2 (strain D39 / NCTC 7466) protein is Holliday junction resolvase RecU.